We begin with the raw amino-acid sequence, 98 residues long: Large ribosomal subunit protein bL28 (98 aa).

The protein belongs to the bacterial ribosomal protein bL28 family.

The sequence is that of Large ribosomal subunit protein bL28 from Beijerinckia indica subsp. indica (strain ATCC 9039 / DSM 1715 / NCIMB 8712).